Here is a 325-residue protein sequence, read N- to C-terminus: MARPLSDRTPGPLLLGGPAGAPPGGGALLGLRSLLQGNSKPKEPASCLLKEKERKATLPSAPVPGPGLETAGPADAPSGAVSGGGSPRGRSGPVAGPSLFAPLLWERTLPFGDVEYVDLDAFLLEHGLPPSPPPPGGLSPAPSPARTPAPSPGPGSCSSSSPRSSPGHAPARATLGAAGGHRAGLTSRDTPSPVDPDTVEVLMTFEPDPADLALSSIPGHETFDPRRHRFSEEELKPQPIMKKARKVQVPEEQKDEKYWSRRYKNNEAAKRSRDARRLKENQISVRAAFLEKENALLRQEVVAVRQELSHYRAVLSRYQAQHGTL.

Disordered stretches follow at residues 1 to 98 (MARP…AGPS), 124 to 203 (LEHG…EVLM), and 230 to 256 (FSEE…QKDE). Over residues 17–28 (GPAGAPPGGGAL) the composition is skewed to gly residues. A compositionally biased stretch (low complexity) spans 71–80 (AGPADAPSGA). Serine 86 is subject to Phosphoserine. Over residues 88 to 98 (RGRSGPVAGPS) the composition is skewed to low complexity. A compositionally biased stretch (pro residues) spans 129–153 (PPSPPPPGGLSPAPSPARTPAPSPG). Low complexity predominate over residues 154–171 (PGSCSSSSPRSSPGHAPA). One can recognise a bZIP domain in the interval 255-318 (DEKYWSRRYK…SHYRAVLSRY (64 aa)). A basic motif region spans residues 257–279 (KYWSRRYKNNEAAKRSRDARRLK). The leucine-zipper stretch occupies residues 283-297 (ISVRAAFLEKENALL).

Belongs to the bZIP family. PAR subfamily. As to quaternary structure, binds DNA as a homodimer or a heterodimer. Can form a heterodimer with TEF. In terms of tissue distribution, expressed in the suprachiasmatic nuclei (SCN) and in most peripheral tissues, with a strong circadian rhythmicity.

The protein resides in the nucleus. Its function is as follows. This transcriptional activator recognizes and binds to the sequence 5'-RTTAYGTAAY-3' found in the promoter of genes such as albumin, CYP2A4 and CYP2A5. It is not essential for circadian rhythm generation, but modulates important clock output genes. May be a direct target for regulation by the circadian pacemaker component clock. May affect circadian period and sleep regulation. The chain is D site-binding protein (Dbp) from Mus musculus (Mouse).